We begin with the raw amino-acid sequence, 197 residues long: Beta-crystallin A2 (197 aa).

The tract at residues 1–11 is N-terminal arm; sequence MSSAPAPGPAP. Beta/gamma crystallin 'Greek key' domains are found at residues 12–52 and 53–99; these read ASLT…KVEN and GVWV…RPVL. The segment at 100–105 is connecting peptide; sequence CANHND. Beta/gamma crystallin 'Greek key' domains lie at 106–147 and 148–196; these read SRVT…KVSS and GAWV…RRVQ.

The protein belongs to the beta/gamma-crystallin family. As to quaternary structure, homo/heterodimer, or complexes of higher-order. The structure of beta-crystallin oligomers seems to be stabilized through interactions between the N-terminal arms.

Functionally, crystallins are the dominant structural components of the vertebrate eye lens. The chain is Beta-crystallin A2 (CRYBA2) from Homo sapiens (Human).